Here is a 938-residue protein sequence, read N- to C-terminus: MSDYKSTLNLPETGFPMRGDLAKREPGMLARWTDDDLYGIIRAAKKGKKTFILHDGPPYANGSIHIGHSVNKILKDIIVKSKGLSGYDSPYVPGWDCHGLPIELKVEQEYGKPGEKFTAAEFRAKCREYAATQVDGQRKDFIRLGVLGDWSHPYLTMDFKTEANIIRALGKIIGNGHLHKGAKPVHWCVDCRSALAEAEVEYYDKTSLSIDVAFQAVDQDALKAKFAVSNVNGPISLVIWTTTPWTLPANRAISIAPDFDYALVQIDGQAVILAKDLVESVMQRIGVTDYTILGTVKGAELELLRFTHPFMGFDVPAILGDHVTLDAGTGAVHTAPGHGPDDYVIGQKYGLETANPVGPDGTYLPGTYPTLDGVNVFKANDIVVALLQEKGALLHVEKMQHSYPCCWRHKTPIIFRATPQWFVSMDQKGLRAQSLKEIKGVQWIPDWGQARIESMVANRPDWCISRQRTWGVPMSLFVHKDTEELHPRTLELMEEVAKRVEVDGIQAWWDLDAKEILGDEADQYVKVPDTLDVWFDSGSTHSSVVDVRPEFAGHAADMYLEGSDQHRGWFMSSLMISTAMKGKAPYRQVLTHGFTVDGQGRKMSKSIGNTVSPQDVMNKLGADILRLWVASTDYTGEMAVSDEILKRAADSYRRIRNTARFLLANLNGFDPAKDMVKPEEMVVLDRWAVGCAKAAQEDILKAYEAYDFHEVVQRLMRFCSVEMGSFYLDIIKDRQYTAKADSVARRSCQTALYHIAEALVRWMAPILSFTADEVWGYLPGEREKYVFTGEWYEGLFGLADSEAMNDAFWDELLKVRGEVNKVIEQARADKKVGGSLEAAVTLYAEPELSAKLTALGDELRFVLLTSGATVADYNDAPADAQQSEVLKGLKVALSKAEGEKCPRCWHYTQDVGKVAEHAEICGRCVSNVAGDGEKRKFA.

The 'HIGH' region motif lies at Pro58 to His68. Lys183 carries the N6-acetyllysine modification. Residue Glu561 participates in L-isoleucyl-5'-AMP binding. Residues Lys602–Ser606 carry the 'KMSKS' region motif. Lys605 contributes to the ATP binding site. Residues Cys901, Cys904, Cys921, and Cys924 each coordinate Zn(2+).

It belongs to the class-I aminoacyl-tRNA synthetase family. IleS type 1 subfamily. In terms of assembly, monomer. The cofactor is Zn(2+).

The protein resides in the cytoplasm. The catalysed reaction is tRNA(Ile) + L-isoleucine + ATP = L-isoleucyl-tRNA(Ile) + AMP + diphosphate. Catalyzes the attachment of isoleucine to tRNA(Ile). As IleRS can inadvertently accommodate and process structurally similar amino acids such as valine, to avoid such errors it has two additional distinct tRNA(Ile)-dependent editing activities. One activity is designated as 'pretransfer' editing and involves the hydrolysis of activated Val-AMP. The other activity is designated 'posttransfer' editing and involves deacylation of mischarged Val-tRNA(Ile). The polypeptide is Isoleucine--tRNA ligase (Escherichia coli O9:H4 (strain HS)).